We begin with the raw amino-acid sequence, 689 residues long: MAREYSLLNTRNIGIMAHIDAGKTTTTERILFHTGKIHKIGETHEGASQMDWMAQEQERGITITSAATTAFWKNTRFNIIDTPGHVDFTVEVERSLRVLDGAVAVLDGQSGVEPQTETVWRQATNYRVPRIVFVNKMDKTGADFIYSVKTIGDRLGAKAAPIQLPIGAEENFTGIIDLVEMKAYEFDGKPEENYKEIEIPSNLLEQAKELRAHLVEVAVEYDEELLMKFLDGGEISISELKSAIRKGVINADFFPVLAGSAFKNKGVKLLLDAVVDYLPSPIDIPSIKGILPTGEEVERHASDTEPFSALAFKVMTDPFVGKLTFFRVYSGILTKGSYILNSTKQQKERVGRILQMHANNRTEIEEVYSGDIAAAVGLKNTTTGDTLCDEKHEIILESMVFPEPVIQLALEPKTKADQEKMSIALSKLAEEDPTFRTYTDDETGQTIIAGMGELHLDIIVDRMKREFNVATNVGAPQVSYRETIKLPGKAEGKYIKQSGGRGSYGHVVIEFEPNKDKGFEWVDKITGGRVSKEYINSARVGLENALRNGVIAGYPMIDVKATIVDGSMHEVDSNEMAYKIAASMALKEAARKMNPVVLEPIMNVEVTVPDEYYGDVMGNISSKRGMIEGSEQRGNAQTIKSKVPLTEMFGYATELRSFTQGRGNYTMIFSHYAEAPKAIADEIIKKSGK.

Positions 8-282 constitute a tr-type G domain; the sequence is LNTRNIGIMA…AVVDYLPSPI (275 aa). Residues 17–24, 81–85, and 135–138 each bind GTP; these read AHIDAGKT, DTPGH, and NKMD.

This sequence belongs to the TRAFAC class translation factor GTPase superfamily. Classic translation factor GTPase family. EF-G/EF-2 subfamily.

It is found in the cytoplasm. Functionally, catalyzes the GTP-dependent ribosomal translocation step during translation elongation. During this step, the ribosome changes from the pre-translocational (PRE) to the post-translocational (POST) state as the newly formed A-site-bound peptidyl-tRNA and P-site-bound deacylated tRNA move to the P and E sites, respectively. Catalyzes the coordinated movement of the two tRNA molecules, the mRNA and conformational changes in the ribosome. This chain is Elongation factor G, found in Mycoplasma capricolum subsp. capricolum (strain California kid / ATCC 27343 / NCTC 10154).